Reading from the N-terminus, the 134-residue chain is Phosphoribosyl-AMP cyclohydrolase (134 aa).

Asp77 provides a ligand contact to Mg(2+). Cys78 is a binding site for Zn(2+). Asp79 and Asp81 together coordinate Mg(2+). The Zn(2+) site is built by Cys95 and Cys102.

It belongs to the PRA-CH family. As to quaternary structure, homodimer. The cofactor is Mg(2+). It depends on Zn(2+) as a cofactor.

The protein resides in the cytoplasm. The catalysed reaction is 1-(5-phospho-beta-D-ribosyl)-5'-AMP + H2O = 1-(5-phospho-beta-D-ribosyl)-5-[(5-phospho-beta-D-ribosylamino)methylideneamino]imidazole-4-carboxamide. It functions in the pathway amino-acid biosynthesis; L-histidine biosynthesis; L-histidine from 5-phospho-alpha-D-ribose 1-diphosphate: step 3/9. Catalyzes the hydrolysis of the adenine ring of phosphoribosyl-AMP. The sequence is that of Phosphoribosyl-AMP cyclohydrolase from Pseudomonas aeruginosa (strain UCBPP-PA14).